A 261-amino-acid polypeptide reads, in one-letter code: Pyridoxine 5'-phosphate synthase (261 aa).

Asn6 is a binding site for 3-amino-2-oxopropyl phosphate. 8–9 (DH) lines the 1-deoxy-D-xylulose 5-phosphate pocket. Arg17 is a binding site for 3-amino-2-oxopropyl phosphate. Residue His42 is the Proton acceptor of the active site. Positions 44 and 49 each coordinate 1-deoxy-D-xylulose 5-phosphate. Residue Glu69 is the Proton acceptor of the active site. Thr99 is a 1-deoxy-D-xylulose 5-phosphate binding site. His213 functions as the Proton donor in the catalytic mechanism. 3-amino-2-oxopropyl phosphate-binding positions include Gly214 and 235–236 (GQ).

The protein belongs to the PNP synthase family. In terms of assembly, homooctamer; tetramer of dimers.

It localises to the cytoplasm. It catalyses the reaction 3-amino-2-oxopropyl phosphate + 1-deoxy-D-xylulose 5-phosphate = pyridoxine 5'-phosphate + phosphate + 2 H2O + H(+). Its pathway is cofactor biosynthesis; pyridoxine 5'-phosphate biosynthesis; pyridoxine 5'-phosphate from D-erythrose 4-phosphate: step 5/5. In terms of biological role, catalyzes the complicated ring closure reaction between the two acyclic compounds 1-deoxy-D-xylulose-5-phosphate (DXP) and 3-amino-2-oxopropyl phosphate (1-amino-acetone-3-phosphate or AAP) to form pyridoxine 5'-phosphate (PNP) and inorganic phosphate. The polypeptide is Pyridoxine 5'-phosphate synthase (Aliarcobacter butzleri (strain RM4018) (Arcobacter butzleri)).